Reading from the N-terminus, the 142-residue chain is Large ribosomal subunit protein uL11 (142 aa).

This sequence belongs to the universal ribosomal protein uL11 family. In terms of assembly, part of the ribosomal stalk of the 50S ribosomal subunit. Interacts with L10 and the large rRNA to form the base of the stalk. L10 forms an elongated spine to which L12 dimers bind in a sequential fashion forming a multimeric L10(L12)X complex. Post-translationally, one or more lysine residues are methylated.

Its function is as follows. Forms part of the ribosomal stalk which helps the ribosome interact with GTP-bound translation factors. The chain is Large ribosomal subunit protein uL11 from Beijerinckia indica subsp. indica (strain ATCC 9039 / DSM 1715 / NCIMB 8712).